The chain runs to 390 residues: Purine permease 21 (390 aa).

Residues 12–34 (QQGKEPIPTDQDERSSVSGSQTK) are disordered. 10 helical membrane-spanning segments follow: residues 44–64 (WLRV…ATIL), 78–98 (LATV…LLSV), 118–138 (LVYI…SIGL), 140–160 (YLPV…TAFF), 169–189 (LTPI…LLAF), 204–224 (YVKG…LLSL), 241–261 (VINM…VGLF), 287–307 (LVWT…LIFE), 312–332 (FSNA…VIIF), and 336–356 (MNGL…SYVY). Residues 367–390 (KSNEIPTTESPDRPEAEGSSEQSK) are disordered.

The protein belongs to the purine permeases (TC 2.A.7.14) family. In terms of tissue distribution, expressed in mesophyll cells.

Its subcellular location is the membrane. In Arabidopsis thaliana (Mouse-ear cress), this protein is Purine permease 21.